The following is a 226-amino-acid chain: Ribonuclease 3 (226 aa).

One can recognise an RNase III domain in the interval Ile6–Asp128. Glu41 contributes to the Mg(2+) binding site. The active site involves Asp45. Mg(2+)-binding residues include Asp114 and Glu117. Glu117 is a catalytic residue. Positions Asp155–Leu225 constitute a DRBM domain.

The protein belongs to the ribonuclease III family. As to quaternary structure, homodimer. Mg(2+) is required as a cofactor.

Its subcellular location is the cytoplasm. The enzyme catalyses Endonucleolytic cleavage to 5'-phosphomonoester.. Its function is as follows. Digests double-stranded RNA. Involved in the processing of primary rRNA transcript to yield the immediate precursors to the large and small rRNAs (23S and 16S). Processes some mRNAs, and tRNAs when they are encoded in the rRNA operon. Processes pre-crRNA and tracrRNA of type II CRISPR loci if present in the organism. This chain is Ribonuclease 3, found in Serratia proteamaculans (strain 568).